The primary structure comprises 165 residues: MVNPTVFFDIAVDGEPLGRVSFELFADKVPKTAENFRALSTGEKGFGYKGSCFHRIIPGFMCQGGDFTRHNGTGGKSIYGEKFEDENFILKHTGPGILSMANAGPNTNGSQFFICTAKTEWLDGKHVVFGKVKEGMNIVEAMERFGSRNGKTSKKITIADCGQLE.

Methionine 1 carries the post-translational modification N-acetylmethionine. Valine 2 is subject to N-acetylvaline; in Peptidyl-prolyl cis-trans isomerase A, N-terminally processed. Residues 7–163 form the PPIase cyclophilin-type domain; sequence FFDIAVDGEP…KKITIADCGQ (157 aa). Lysine 28 is modified (N6-acetyllysine; alternate). Residue lysine 28 forms a Glycyl lysine isopeptide (Lys-Gly) (interchain with G-Cter in SUMO2); alternate linkage. A Glycyl lysine isopeptide (Lys-Gly) (interchain with G-Cter in ubiquitin); alternate cross-link involves residue lysine 28. N6-acetyllysine occurs at positions 44 and 76. The residue at position 77 (serine 77) is a Phosphoserine. An N6-acetyllysine; alternate modification is found at lysine 82. Residue lysine 82 forms a Glycyl lysine isopeptide (Lys-Gly) (interchain with G-Cter in SUMO2); alternate linkage. Threonine 93 is modified (phosphothreonine). N-linked (GlcNAc...) asparagine glycosylation occurs at asparagine 108. Residues lysine 125, lysine 131, and lysine 133 each carry the N6-acetyllysine modification.

Belongs to the cyclophilin-type PPIase family. PPIase A subfamily. In terms of assembly, interacts with protein phosphatase PPP3CA/calcineurin A. Interacts with isoform 2 of BSG/CD147. Interacts with FOXO1; the interaction promotes FOXO1 dephosphorylation, nuclear accumulation and transcriptional activity. Interacts with integrin ITGA2B:ITGB3; the interaction is ROS and peptidyl-prolyl cis-trans isomerase (PPIase) activity-dependent and is increased in the presence of thrombin. Interacts with MAP3K5. Interacts with TARDBP; the interaction is dependent on the RNA-binding activity of TARDBP and the PPIase activity of PPIA/CYPA and the acetylation of PPIA/CYPA at Lys-125 favors the interaction. Interacts with HNRNPA1, HNRNPA2B1, HNRNPC, RBMX, HNRNPK and HNRNPM. Acetylation at Lys-125 markedly inhibits catalysis of cis to trans isomerization. PPIA acetylation also antagonizes the immunosuppressive effects of cyclosporine by inhibiting the sequential steps of cyclosporine binding and calcineurin inhibition. Acetylation at Lys-125 favors the interaction with TARDBP.

The protein localises to the cytoplasm. The protein resides in the secreted. Its subcellular location is the nucleus. It catalyses the reaction [protein]-peptidylproline (omega=180) = [protein]-peptidylproline (omega=0). Binds cyclosporin A (CsA). CsA mediates some of its effects via an inhibitory action on PPIase. Catalyzes the cis-trans isomerization of proline imidic peptide bonds in oligopeptides. Exerts a strong chemotactic effect on leukocytes partly through activation of one of its membrane receptors BSG/CD147, initiating a signaling cascade that culminates in MAPK/ERK activation. Activates endothelial cells (ECs) in a proinflammatory manner by stimulating activation of NF-kappa-B and ERK, JNK and p38 MAP-kinases and by inducing expression of adhesion molecules including SELE and VCAM1. Induces apoptosis in ECs by promoting the FOXO1-dependent expression of CCL2 and BCL2L11 which are involved in EC chemotaxis and apoptosis. In response to oxidative stress, initiates proapoptotic and antiapoptotic signaling in ECs via activation of NF-kappa-B and AKT1 and up-regulation of antiapoptotic protein BCL2. Negatively regulates MAP3K5/ASK1 kinase activity, autophosphorylation and oxidative stress-induced apoptosis mediated by MAP3K5/ASK1. Necessary for the assembly of TARDBP in heterogeneous nuclear ribonucleoprotein (hnRNP) complexes and regulates TARDBP binding to RNA UG repeats and TARDBP-dependent expression of HDAC6, ATG7 and VCP which are involved in clearance of protein aggregates. Plays an important role in platelet activation and aggregation. Regulates calcium mobilization and integrin ITGA2B:ITGB3 bidirectional signaling via increased ROS production as well as by facilitating the interaction between integrin and the cell cytoskeleton. Binds heparan sulfate glycosaminoglycans. In Symphalangus syndactylus (Siamang), this protein is Peptidyl-prolyl cis-trans isomerase A (PPIA).